A 700-amino-acid chain; its full sequence is Putative glutamine-dependent NAD(+) synthetase (700 aa).

Residues valine 5–valine 275 form the CN hydrolase domain. Glutamate 45 functions as the Proton acceptor; for glutaminase activity in the catalytic mechanism. The For glutaminase activity role is filled by lysine 114. Cysteine 175 serves as the catalytic Nucleophile; for glutaminase activity. Residues isoleucine 327–lysine 700 are ligase. Proline 357–serine 364 contributes to the ATP binding site. Serine 359 is a catalytic residue.

This sequence in the C-terminal section; belongs to the NAD synthetase family.

It catalyses the reaction deamido-NAD(+) + L-glutamine + ATP + H2O = L-glutamate + AMP + diphosphate + NAD(+) + H(+). The protein operates within cofactor biosynthesis; NAD(+) biosynthesis; NAD(+) from deamido-NAD(+) (L-Gln route): step 1/1. The protein is Putative glutamine-dependent NAD(+) synthetase of Schizosaccharomyces pombe (strain 972 / ATCC 24843) (Fission yeast).